We begin with the raw amino-acid sequence, 31 residues long: Cyclotide vinc-B (31 aa).

The segment at residues Gly1–Asn31 is a cross-link (cyclopeptide (Gly-Asn)). 3 disulfide bridges follow: Cys6/Cys20, Cys10/Cys22, and Cys15/Cys28.

This sequence belongs to the cyclotide family. In terms of processing, this is a cyclic peptide.

Probably participates in a plant defense mechanism. This chain is Cyclotide vinc-B, found in Viola inconspicua.